The following is a 61-amino-acid chain: Probable tautomerase lin2709 (61 aa).

Residue Pro2 is the Proton acceptor; via imino nitrogen of the active site.

This sequence belongs to the 4-oxalocrotonate tautomerase family.

This is Probable tautomerase lin2709 from Listeria innocua serovar 6a (strain ATCC BAA-680 / CLIP 11262).